A 311-amino-acid chain; its full sequence is Bifunctional protein FolD (311 aa).

An NADP(+)-binding site is contributed by 174–176 (GKG).

The protein belongs to the tetrahydrofolate dehydrogenase/cyclohydrolase family. As to quaternary structure, homodimer.

The catalysed reaction is (6R)-5,10-methylene-5,6,7,8-tetrahydrofolate + NADP(+) = (6R)-5,10-methenyltetrahydrofolate + NADPH. The enzyme catalyses (6R)-5,10-methenyltetrahydrofolate + H2O = (6R)-10-formyltetrahydrofolate + H(+). It functions in the pathway one-carbon metabolism; tetrahydrofolate interconversion. Catalyzes the oxidation of 5,10-methylenetetrahydrofolate to 5,10-methenyltetrahydrofolate and then the hydrolysis of 5,10-methenyltetrahydrofolate to 10-formyltetrahydrofolate. This chain is Bifunctional protein FolD, found in Pyrobaculum neutrophilum (strain DSM 2338 / JCM 9278 / NBRC 100436 / V24Sta) (Thermoproteus neutrophilus).